Here is a 129-residue protein sequence, read N- to C-terminus: uncharacterized protein (129 aa).

The tract at residues 23 to 101 (KASTSSESCQ…TAATRTTSKK (79 aa)) is disordered. Composition is skewed to basic and acidic residues over residues 31 to 40 (CQRRGVRDDT) and 67 to 80 (EGDRGPPRRPEKEP).

This is an uncharacterized protein from Ictaluridae (bullhead catfishes).